A 166-amino-acid chain; its full sequence is Regulatory protein RecX (166 aa).

It belongs to the RecX family.

The protein resides in the cytoplasm. In terms of biological role, modulates RecA activity. This chain is Regulatory protein RecX, found in Escherichia coli O7:K1 (strain IAI39 / ExPEC).